Consider the following 319-residue polypeptide: Annexin A4 (319 aa).

Ala-2 carries the N-acetylalanine modification. The residue at position 7 (Thr-7) is a Phosphothreonine. Ser-12 carries the post-translational modification Phosphoserine. Annexin repeat units lie at residues 14-85 (FNAM…GMMT), 86-157 (PTVL…SLSA), 169-241 (ALVR…AIVK), and 245-316 (NKSA…VLCG). N6-acetyllysine is present on residues Lys-213, Lys-293, and Lys-300.

The protein belongs to the annexin family.

The protein localises to the zymogen granule membrane. Calcium/phospholipid-binding protein which promotes membrane fusion and is involved in exocytosis. The protein is Annexin A4 of Homo sapiens (Human).